Reading from the N-terminus, the 284-residue chain is 4-diphosphocytidyl-2-C-methyl-D-erythritol kinase (284 aa).

The active site involves K14. 97 to 107 (PMGGGLGGGSS) lines the ATP pocket. Residue D139 is part of the active site.

This sequence belongs to the GHMP kinase family. IspE subfamily.

The enzyme catalyses 4-CDP-2-C-methyl-D-erythritol + ATP = 4-CDP-2-C-methyl-D-erythritol 2-phosphate + ADP + H(+). Its pathway is isoprenoid biosynthesis; isopentenyl diphosphate biosynthesis via DXP pathway; isopentenyl diphosphate from 1-deoxy-D-xylulose 5-phosphate: step 3/6. In terms of biological role, catalyzes the phosphorylation of the position 2 hydroxy group of 4-diphosphocytidyl-2C-methyl-D-erythritol. The sequence is that of 4-diphosphocytidyl-2-C-methyl-D-erythritol kinase from Psychromonas ingrahamii (strain DSM 17664 / CCUG 51855 / 37).